A 359-amino-acid chain; its full sequence is Putative gluconeogenesis factor (359 aa).

Residues 317–359 are disordered; the sequence is VGNQDSSAPTVAATEQIRLDGKRPQTGVNGPVGKGPRGDDAWR.

Belongs to the gluconeogenesis factor family.

The protein localises to the cytoplasm. In terms of biological role, required for morphogenesis under gluconeogenic growth conditions. In Mycobacterium leprae (strain TN), this protein is Putative gluconeogenesis factor.